An 82-amino-acid polypeptide reads, in one-letter code: Putative membrane protein insertion efficiency factor (82 aa).

The protein belongs to the UPF0161 family.

Its subcellular location is the cell inner membrane. Functionally, could be involved in insertion of integral membrane proteins into the membrane. This chain is Putative membrane protein insertion efficiency factor, found in Aeromonas salmonicida (strain A449).